The chain runs to 331 residues: L-lactate dehydrogenase A chain (331 aa).

Residues Gly29–Lys57 and Arg98 each bind NAD(+). The substrate site is built by Arg105, Asn137, and Arg168. Asn137 lines the NAD(+) pocket. The active-site Proton acceptor is His192. Substrate is bound at residue Thr247.

It belongs to the LDH/MDH superfamily. LDH family. Homotetramer.

The protein localises to the cytoplasm. The enzyme catalyses (S)-lactate + NAD(+) = pyruvate + NADH + H(+). It functions in the pathway fermentation; pyruvate fermentation to lactate; (S)-lactate from pyruvate: step 1/1. Its function is as follows. Interconverts simultaneously and stereospecifically pyruvate and lactate with concomitant interconversion of NADH and NAD(+). The sequence is that of L-lactate dehydrogenase A chain (ldha) from Notothenia angustata (Rockcod).